A 730-amino-acid polypeptide reads, in one-letter code: Translation initiation factor IF-2 (730 aa).

The disordered stretch occupies residues 48–151 (GNGNQKQGGS…NKAKPLPEKV (104 aa)). 2 stretches are compositionally biased toward basic and acidic residues: residues 61–77 (EQQK…DHGQ) and 89–104 (NQHD…KGKA). Basic residues predominate over residues 110 to 123 (KPKHKGNKNKKQHQ). Residues 137 to 148 (RQPEMNKAKPLP) are compositionally biased toward basic and acidic residues. The region spanning 231 to 400 (ERPPVVTIMG…LLVAEVEELK (170 aa)) is the tr-type G domain. A G1 region spans residues 240–247 (GHVDHGKT). 240-247 (GHVDHGKT) lines the GTP pocket. A G2 region spans residues 265-269 (GITQH). The segment at 286 to 289 (DTPG) is G3. Residues 286 to 290 (DTPGH) and 340 to 343 (NKMD) contribute to the GTP site. The interval 340-343 (NKMD) is G4. The tract at residues 376 to 378 (SAL) is G5.

Belongs to the TRAFAC class translation factor GTPase superfamily. Classic translation factor GTPase family. IF-2 subfamily.

It is found in the cytoplasm. One of the essential components for the initiation of protein synthesis. Protects formylmethionyl-tRNA from spontaneous hydrolysis and promotes its binding to the 30S ribosomal subunits. Also involved in the hydrolysis of GTP during the formation of the 70S ribosomal complex. The polypeptide is Translation initiation factor IF-2 (Halalkalibacterium halodurans (strain ATCC BAA-125 / DSM 18197 / FERM 7344 / JCM 9153 / C-125) (Bacillus halodurans)).